The primary structure comprises 318 residues: Serine protease 41 (318 aa).

A signal peptide spans 1 to 19; it reads MGARGALLLALLLARAGLG. A propeptide spanning residues 20-54 is cleaved from the precursor; the sequence is KPGELGALQAGPGAARRPGGGGREEACGHREIHAL. The Peptidase S1 domain maps to 55 to 297; the sequence is VAGGVESARG…YFHWIRRVMS (243 aa). Cysteine 80 and cysteine 96 are disulfide-bonded. Residues histidine 95 and aspartate 147 each act as charge relay system in the active site. Cystine bridges form between cysteine 181/cysteine 255, cysteine 215/cysteine 234, and cysteine 245/cysteine 273. Asparagine 211 carries an N-linked (GlcNAc...) asparagine glycan. Serine 249 acts as the Charge relay system in catalysis. N-linked (GlcNAc...) asparagine glycosylation is present at asparagine 284. Serine 299 is lipidated: GPI-anchor amidated serine. The propeptide at 300–318 is removed in mature form; sequence TPRPNPSQLLLLLALLWAP.

Belongs to the peptidase S1 family. In terms of processing, N-glycosylated.

The protein resides in the cell membrane. This is Serine protease 41 from Homo sapiens (Human).